The following is a 240-amino-acid chain: MILYPAIDLKDGQAVRLVHGEMDQATVFNDNPAAQALEFVAAGCEWLHLVDLNGAFAGEPVNAAPVEAILEQCKVPAQLGGGIRDMATIERWLDKGLARVILGTVAVENPDLVREAARAFPGKVAVGIDARNGRVATKGWAEETDVMVTDLAKSFEDAGVAAIIYTDILRDGAMKGPNIKATADLARAVSIPVIASGGVSSLEDLIALRDCGASLNGAISGRALYDGALDLKQALAALKG.

Residue Asp-8 is the Proton acceptor of the active site. Asp-129 (proton donor) is an active-site residue.

The protein belongs to the HisA/HisF family.

It localises to the cytoplasm. The enzyme catalyses 1-(5-phospho-beta-D-ribosyl)-5-[(5-phospho-beta-D-ribosylamino)methylideneamino]imidazole-4-carboxamide = 5-[(5-phospho-1-deoxy-D-ribulos-1-ylimino)methylamino]-1-(5-phospho-beta-D-ribosyl)imidazole-4-carboxamide. It functions in the pathway amino-acid biosynthesis; L-histidine biosynthesis; L-histidine from 5-phospho-alpha-D-ribose 1-diphosphate: step 4/9. The chain is 1-(5-phosphoribosyl)-5-[(5-phosphoribosylamino)methylideneamino] imidazole-4-carboxamide isomerase 1 from Ruegeria pomeroyi (strain ATCC 700808 / DSM 15171 / DSS-3) (Silicibacter pomeroyi).